Reading from the N-terminus, the 4423-residue chain is Nonribosomal peptide synthetase 7 (4423 aa).

Residues 572–986 (NIYPCTSIQE…LISQDDKNRI (415 aa)) form a condensation 1 region. Residues 1007 to 1404 (ERIQKQPSAV…GRRDTQVKIR (398 aa)) form an adenylation 1 region. Residues 1533–1609 (LPLTETEQKL…DLARTIDERN (77 aa)) form the Carrier 1 domain. The residue at position 1570 (Ser-1570) is an O-(pantetheine 4'-phosphoryl)serine. Positions 1657-2066 (EDVYPCTSLQ…QFLDETHHET (410 aa)) are condensation 2. Positions 2102 to 2499 (RDVAKEQPDS…YIGRMGSEVK (398 aa)) are adenylation 2. The Carrier 2 domain occupies 2642–2718 (VPQTRIGKKL…DCARILEADQ (77 aa)). Ser-2679 carries the post-translational modification O-(pantetheine 4'-phosphoryl)serine. A condensation 3 region spans residues 2764-3170 (EDVYPCTPMQ…AASASSDDQT (407 aa)). Positions 3205 to 3609 (RSLETRPDSQ…GRGDSQIKIR (405 aa)) are adenylation 3. The Carrier 3 domain maps to 3731-3804 (TESEYITRTL…KMAVVAQHQT (74 aa)). At Ser-3765 the chain carries O-(pantetheine 4'-phosphoryl)serine. The segment at 3875-4278 (TFVLDAEGDL…SQDEKLALLG (404 aa)) is condensation 4. Over residues 4288-4300 (KLTKLQRVNSPKE) the composition is skewed to polar residues. The disordered stretch occupies residues 4288 to 4312 (KLTKLQRVNSPKEQTLRKDKPTNGV).

It belongs to the NRP synthetase family.

Its pathway is secondary metabolite biosynthesis. Functionally, nonribosomal peptide synthetase; part of the gene cluster that mediates the biosynthesis of the lipopeptide fusaristatin A. Fusaristatin A consists of a polyketide chain linked to three amino acid residues glutamine (Gln), dehydroalanine (dehydro-Ala), and beta-aminoisobutyric acid. The biosynthesis starts with formation of a linear polyketide chain by the highly reducing polyketide synthase PKS6. The gene cluster does not contain an acyl-CoA ligase or an acyl-transferase, and it is therefore predicted that the polyketide is transferred directly to the nonribosomal peptide synthetase NRPS7. Modules 1-3 from NRPS7 incorporate dehydro-Ala, Gln, and beta-aminoisobutyric acid in the compound, which is released by cyclization. The beta-aminoisobutyric acid units are most likely not freely available to the NRPS, but can be synthesized from thymine, which requires a dehydrogenase, a monooxygenase, and an aminotransferase. The fusaristatin A cluster contains a cytochrome P450 monooxygenase (FGSG_08207) and an aminotransferase (FGSG_17085), which theoretically can perform two of the enzymatic steps. The enzymes may however also be involved in biosynthesis of dehydroalanine or modification of the polyketide. The dehydro-Ala residue can be a result of cyclization, where serine is dehydrated. The last gene of the cluster encodes a protein with an A/B barrel domain found in variable enzymes, which hampers functional prediction. The sequence is that of Nonribosomal peptide synthetase 7 from Gibberella zeae (strain ATCC MYA-4620 / CBS 123657 / FGSC 9075 / NRRL 31084 / PH-1) (Wheat head blight fungus).